Here is an 80-residue protein sequence, read N- to C-terminus: Putative membrane protein insertion efficiency factor (80 aa).

The interval 61–80 is disordered; the sequence is KTGKDPVPDRFSLKRNQEGE. Basic and acidic residues predominate over residues 62–80; sequence TGKDPVPDRFSLKRNQEGE.

Belongs to the UPF0161 family.

The protein localises to the cell membrane. Could be involved in insertion of integral membrane proteins into the membrane. This chain is Putative membrane protein insertion efficiency factor, found in Streptococcus pneumoniae (strain P1031).